A 416-amino-acid polypeptide reads, in one-letter code: PRKCA-binding protein (416 aa).

Positions 22 to 105 (KVTLQKDAQN…EVTIHYNKLQ (84 aa)) constitute a PDZ domain. 2 residues coordinate Zn(2+): Cys44 and Cys46. Thr82 bears the Phosphothreonine mark. Residues 144-357 (LCNDGLVKRL…CYAVLRDADV (214 aa)) enclose the AH domain. The tract at residues 373–416 (PNQGGFTDGEDEEEEEEDGAAREVSKDARGATGPTDKGGSWCDS) is disordered. Acidic residues predominate over residues 380–390 (DGEDEEEEEED). Residues 391–401 (GAAREVSKDAR) show a composition bias toward basic and acidic residues. The S-palmitoyl cysteine; by DHHC8 moiety is linked to residue Cys414.

In terms of assembly, monomer and homodimer. Interacts with CXADR. Interacts presynaptically with the glutamate receptors GRIA2, GRIA3, GRIK3, isoform 3 of GRIA4, isoform A of GRM4, GRM7 and GRM8; with NAPA and NAPB; and with BTG2. The interaction with NAPA and NAPB disrupts the interaction with GRIA2, conducting to the internalization of GRIA2. Interacts with PRKCA; with the amine transporters SLC6A2 and SLC6A3; with the channels ASIC1 and ASIC2; with the GTP-binding proteins ARF1 and ARF3; with the ephrin receptor tyrosine kinases EPHA7, EPHB1 and EPHB2; with ERBB2 and through its PDZ domain with the C-terminal tail of PRLHR. Interacts with UNC5A. Interacts (via AH domain) with NCS1/FREQ; in a calcium-dependent manner. Interacts with F-actin and associates with the ARP2/3 complex. Interacts (via PDZ domain) with ARF1 (activated); the interaction blocks Arp2/3 complex inhibition. Interacts with SORCS3. In terms of processing, phosphorylation at Thr-82 appears to inhibit the interaction with AMPA receptors. Palmitoylation on Cys-414 is essential for long-term synaptic depression (LTD). Ubiquitous.

The protein resides in the cytoplasm. Its subcellular location is the perinuclear region. It is found in the membrane. The protein localises to the postsynaptic density. It localises to the synapse. The protein resides in the synaptosome. Its subcellular location is the cytoskeleton. Its function is as follows. Probable adapter protein that bind to and organize the subcellular localization of a variety of membrane proteins containing some PDZ recognition sequence. Involved in the clustering of various receptors, possibly by acting at the receptor internalization level. Plays a role in synaptic plasticity by regulating the trafficking and internalization of AMPA receptors. May be regulated upon PRKCA activation. May regulate ASIC1/ASIC3 channel. Regulates actin polymerization by inhibiting the actin-nucleating activity of the Arp2/3 complex; the function is competitive with nucleation promoting factors and is linked to neuronal morphology regulation and AMPA receptor (AMPAR) endocytosis. Via interaction with the Arp2/3 complex involved in regulation of synaptic plasicity of excitatory synapses and required for spine shrinkage during long-term depression (LTD). Involved in regulation of astrocyte morphology, antagonistic to Arp2/3 complex activator WASL/N-WASP function. This is PRKCA-binding protein (Pick1) from Rattus norvegicus (Rat).